Here is a 418-residue protein sequence, read N- to C-terminus: Tyrosine--tRNA ligase (418 aa).

L-tyrosine is bound at residue Tyr34. The 'HIGH' region signature appears at 39-48 (PTGDSMHIGH). Residues Tyr166 and Gln170 each contribute to the L-tyrosine site. The short motif at 228–232 (KFGKT) is the 'KMSKS' region element. Lys231 provides a ligand contact to ATP. The S4 RNA-binding domain occupies 350–417 (TNIVELLTET…KKNYFLAKVK (68 aa)).

This sequence belongs to the class-I aminoacyl-tRNA synthetase family. TyrS type 1 subfamily. Homodimer.

It is found in the cytoplasm. The catalysed reaction is tRNA(Tyr) + L-tyrosine + ATP = L-tyrosyl-tRNA(Tyr) + AMP + diphosphate + H(+). Catalyzes the attachment of tyrosine to tRNA(Tyr) in a two-step reaction: tyrosine is first activated by ATP to form Tyr-AMP and then transferred to the acceptor end of tRNA(Tyr). This chain is Tyrosine--tRNA ligase, found in Levilactobacillus brevis (Lactobacillus brevis).